The primary structure comprises 57 residues: UPF0391 membrane protein Atu4467 (57 aa).

The next 2 membrane-spanning stretches (helical) occupy residues 4 to 24 (WALIFFVISLIAGVFGFTGIS) and 33 to 53 (ILFFIAVVIFLVFLVLALMAG).

It belongs to the UPF0391 family.

It is found in the cell membrane. This chain is UPF0391 membrane protein Atu4467, found in Agrobacterium fabrum (strain C58 / ATCC 33970) (Agrobacterium tumefaciens (strain C58)).